The chain runs to 1634 residues: MNNQFEVFRPNSYTYDVLAKQYTETIASSGHMVLSHHGFYKGNLNENKLKNGKGTFLFPNSIYSGQWNSDKKEGDGTLIILKPQKIQKKSSQSKSQQQPPSQTKKSSSPINLSPRLQGQNPTITTNGSNNNNKVNIESLINKLNDKFNQCEELINQTSQEEFLKQQDYYNGKWINGKANGIGCFHFSKDDSMHYDFWRYGVVIRYANQQNILKPLYDDSVPAGLLNSREILKDMMEDWKSVVVGDDDFPCTRPYLTTPTASISLNRENINIYSNNNSNGTTSPTSPSILSPTQVPLSPPKVNTAPSTLISEDDNNFTSGSGFCSPSSSLSIKMSSPISSGLQHSKTQPNVSQSQNQQIQQQQQQQQQQPSLLVNSTIVQTNTNNNKFNDLLINQRNQQKILKKQLLKSNQQKQSFGIITSNYLKSRLENEEKFFMTLILFISKWEIPFKSFNIPNNPSIHASFLIFVPDTDNCTFISLSNLIMQSNVLERLIFKLLIDPMSKVLNSTALNTLTESQTLGNLSTYNNNNNNTINNTISIGQSKSANSSPNKISPSVSLVGVSSLTTLPSSTPEERELHKLLPICLDLDETPHIEKECIASILNIFKLFPTIEDYQPPQFIPDTICKFISCFKKTRALENYLLQKQFQMSKDYFFKPTATTATPNNNNNSSGNSKLTTTTHLTNNTTTTTIVSGSKTLKRTKVTPPSQSSSSSSPSSDQTNLPSIAISSSNGISYKSPPVTSPPPTKPTFSVSLTTSNKIDISASNPNGNGMKLYGSNATTTAASSILNNNNNNNNNNNNNNNNNNNNNNNNNNNCGQRRQTVESIFPTFKQQSNTDLLTSLMQSTSISLSNKYSSSTTTISTVDQTPPELTLQSLNILLSQFKQSYLFPDSITLSFNYLTKQKENIEQMEKIIQSKIQLIQETKPKQQQLQQQQQKNLLNYSSSFNEYLTNHDNLIDSILIGLKNDLSQLQKSFEICLTLYKEMITQQIQLVLKRLKSAHSFINQLIGLPQSRVSKLPKDFIVRFIKHTHRIIYQLYNSANNTFIKLDNEIKIDIDEFIVQSNDLFSKLPNGAITTNGTTMNSIPSPVSPIGSPPLPSISASVYEYFLGKKSSSSLTLNVSQQQQSSNSLDRSSVQFEPSDITPGPFSFISPLDKIIEEIMSGHYQLILPVASSGDDLLVSVVSLGLIDLRSYLSSNNRLKEISKSSLIQLFNILLHSTVICHNINSYLPEVFKTLILLLPFYPKKDELFIKYKEIFIGFMELCVIDELCGFSFIYLEFLGLLVKPKKKGLRKELKKEFVELFPIQLFIDIMEKPIVDATNKNAEKTRAQAAQILINLSISSIECLLEVKSKNALGPILDICKFGQAFAHTQIEESELQILQFLGEGALAEVHKGIWKGKEVAVKIFNEGSFSFRLEDFLKEVAILGLISHPNLLKLKGACIAPRSHKSTFMIVTELMHKGTLLEVINKNKPLSLEDIIKYALSVAQGLAYLHSVDFIHRDIKAANILVDKNNNAKVGDFGLSRVIDNNFNMTAVAGTPKWESPECLMGEAYTSASDVYSYGMMLFELATGDEPFLEIQSIVELARSVCDKKLKPKISSSVPNFISSLIKDCLHNSPKKRPTMNQIIQKLCNHKC.

One copy of the MORN 1 repeat lies at 40-63 (YKGNLNENKLKNGKGTFLFPNSIY). Positions 84-131 (QKIQKKSSQSKSQQQPPSQTKKSSSPINLSPRLQGQNPTITTNGSNNN) are disordered. Residues 89–109 (KSSQSKSQQQPPSQTKKSSSP) are compositionally biased toward low complexity. Residues 110–119 (INLSPRLQGQ) show a composition bias toward polar residues. Low complexity predominate over residues 120-131 (NPTITTNGSNNN). An MORN 2 repeat occupies 169–191 (YNGKWINGKANGIGCFHFSKDDS). Composition is skewed to low complexity over residues 273–292 (SNNN…LSPT) and 318–339 (SGSG…PISS). Disordered regions lie at residues 273 to 367 (SNNN…QQQQ), 658 to 750 (TTAT…TFSV), and 783 to 816 (SSIL…NCGQ). Polar residues predominate over residues 340-351 (GLQHSKTQPNVS). 3 stretches are compositionally biased toward low complexity: residues 352 to 367 (QSQN…QQQQ), 658 to 688 (TTAT…TTTT), and 703 to 715 (PPSQ…SPSS). A compositionally biased stretch (polar residues) spans 716 to 732 (DQTNLPSIAISSSNGIS). A compositionally biased stretch (low complexity) spans 787 to 813 (NNNNNNNNNNNNNNNNNNNNNNNNNNN). A helical membrane pass occupies residues 1255–1275 (IFIGFMELCVIDELCGFSFIY). One can recognise a Protein kinase domain in the interval 1377 to 1634 (LQILQFLGEG…IIQKLCNHKC (258 aa)). ATP-binding positions include 1383 to 1391 (LGEGALAEV) and Lys-1404. The active-site Proton acceptor is Asp-1500.

It belongs to the protein kinase superfamily. TKL Ser/Thr protein kinase family.

Its subcellular location is the membrane. It catalyses the reaction L-seryl-[protein] + ATP = O-phospho-L-seryl-[protein] + ADP + H(+). The catalysed reaction is L-threonyl-[protein] + ATP = O-phospho-L-threonyl-[protein] + ADP + H(+). The protein is Probable serine/threonine-protein kinase DDB_G0282895 of Dictyostelium discoideum (Social amoeba).